We begin with the raw amino-acid sequence, 318 residues long: 4-diphosphocytidyl-2-C-methyl-D-erythritol kinase (318 aa).

Lysine 25 is a catalytic residue. 110–120 (PVAGGMAGGSA) contacts ATP. Aspartate 152 is a catalytic residue.

It belongs to the GHMP kinase family. IspE subfamily.

It catalyses the reaction 4-CDP-2-C-methyl-D-erythritol + ATP = 4-CDP-2-C-methyl-D-erythritol 2-phosphate + ADP + H(+). It participates in isoprenoid biosynthesis; isopentenyl diphosphate biosynthesis via DXP pathway; isopentenyl diphosphate from 1-deoxy-D-xylulose 5-phosphate: step 3/6. In terms of biological role, catalyzes the phosphorylation of the position 2 hydroxy group of 4-diphosphocytidyl-2C-methyl-D-erythritol. The protein is 4-diphosphocytidyl-2-C-methyl-D-erythritol kinase of Mycobacterium tuberculosis (strain ATCC 25177 / H37Ra).